The primary structure comprises 507 residues: ATP synthase subunit alpha, chloroplastic (507 aa).

Position 170 to 177 (170 to 177 (GDRQTGKT)) interacts with ATP.

This sequence belongs to the ATPase alpha/beta chains family. F-type ATPases have 2 components, CF(1) - the catalytic core - and CF(0) - the membrane proton channel. CF(1) has five subunits: alpha(3), beta(3), gamma(1), delta(1), epsilon(1). CF(0) has four main subunits: a, b, b' and c.

It localises to the plastid. The protein resides in the chloroplast thylakoid membrane. The catalysed reaction is ATP + H2O + 4 H(+)(in) = ADP + phosphate + 5 H(+)(out). Its function is as follows. Produces ATP from ADP in the presence of a proton gradient across the membrane. The alpha chain is a regulatory subunit. This is ATP synthase subunit alpha, chloroplastic from Pelargonium hortorum (Common geranium).